We begin with the raw amino-acid sequence, 389 residues long: Large envelope protein (389 aa).

At Met-1 the chain carries N-acetylmethionine. Gly-2 is lipidated: N-myristoyl glycine; by host. The pre-S1 stretch occupies residues 2–108 (GTNLSVPNPL…PPLRDSHPQA (107 aa)). Residues 2–163 (GTNLSVPNPL…SARTGDPVTI (162 aa)) form a pre-S region. The Virion surface; in external conformation portion of the chain corresponds to 2–170 (GTNLSVPNPL…VTIMENITSG (169 aa)). Residues 2-242 (GTNLSVPNPL…PGYRWMCLRR (241 aa)) are Intravirion; in internal conformation-facing. The span at 77 to 95 (VSTIPPPASTNRQSGRQPT) shows a compositional bias: polar residues. Positions 77–103 (VSTIPPPASTNRQSGRQPTPISPPLRD) are disordered. The segment at 109 to 163 (MQWNSTALHQALQDPRVRGLYLPAGGSSSGTVNPAPNIASHISSISARTGDPVTI) is pre-S2. A helical transmembrane segment spans residues 171-191 (FLGPLLVLQAGFFLLTRILTI). At 192–242 (PQSLDSWWTSLNFLGGSPVCLGQNSQSPTSNHSPTSCPPICPGYRWMCLRR) the chain is on the intravirion; in external conformation side. The chain crosses the membrane as a helical span at residues 243 to 263 (FIIFLFILLLCLIFLLVLLDY). At 264-337 (QGMLPVCPLI…WASVRFSWLS (74 aa)) the chain is on the virion surface side. The N-linked (GlcNAc...) asparagine; by host glycan is linked to Asn-309. A helical membrane pass occupies residues 338 to 358 (LLVPFVQWFVGLSPTVWLSAI). The Intravirion portion of the chain corresponds to 359-364 (WMMWYW). A helical transmembrane segment spans residues 365-387 (GPSLYSIVSPFIPLLPIFFCLWV). Topologically, residues 388–389 (YI) are virion surface.

It belongs to the orthohepadnavirus major surface antigen family. In its internal form (Li-HBsAg), interacts with the capsid protein and with the isoform S. Interacts with host chaperone CANX. As to quaternary structure, associates with host chaperone CANX through its pre-S2 N glycan; this association may be essential for isoform M proper secretion. In terms of assembly, interacts with isoform L. Interacts with the antigens of satellite virus HDV (HDVAgs); this interaction is required for encapsidation of HDV genomic RNA. In terms of processing, isoform M is N-terminally acetylated by host at a ratio of 90%, and N-glycosylated by host at the pre-S2 region. Myristoylated.

Its subcellular location is the virion membrane. The large envelope protein exists in two topological conformations, one which is termed 'external' or Le-HBsAg and the other 'internal' or Li-HBsAg. In its external conformation the protein attaches the virus to cell receptors and thereby initiating infection. This interaction determines the species specificity and liver tropism. This attachment induces virion internalization predominantly through caveolin-mediated endocytosis. The large envelope protein also assures fusion between virion membrane and endosomal membrane. In its internal conformation the protein plays a role in virion morphogenesis and mediates the contact with the nucleocapsid like a matrix protein. Functionally, the middle envelope protein plays an important role in the budding of the virion. It is involved in the induction of budding in a nucleocapsid independent way. In this process the majority of envelope proteins bud to form subviral lipoprotein particles of 22 nm of diameter that do not contain a nucleocapsid. The sequence is that of Large envelope protein from Hepatitis B virus genotype A2 subtype adw (isolate Japan/Nishioka/1983) (HBV-A).